A 134-amino-acid polypeptide reads, in one-letter code: Small ribosomal subunit protein uS8 (134 aa).

It belongs to the universal ribosomal protein uS8 family. In terms of assembly, part of the 30S ribosomal subunit. Contacts proteins S5 and S12.

One of the primary rRNA binding proteins, it binds directly to 16S rRNA central domain where it helps coordinate assembly of the platform of the 30S subunit. This chain is Small ribosomal subunit protein uS8, found in Petrotoga mobilis (strain DSM 10674 / SJ95).